The sequence spans 486 residues: Cysteine--tRNA ligase (486 aa).

Residue Cys-27 coordinates Zn(2+). The 'HIGH' region signature appears at 29–39 (PTTYNFIHLGN). Residues Cys-207, His-232, and Glu-236 each coordinate Zn(2+). A 'KMSKS' region motif is present at residues 264 to 268 (KMSKS). Lys-267 is a binding site for ATP.

The protein belongs to the class-I aminoacyl-tRNA synthetase family. Monomer. Zn(2+) is required as a cofactor.

The protein resides in the cytoplasm. It catalyses the reaction tRNA(Cys) + L-cysteine + ATP = L-cysteinyl-tRNA(Cys) + AMP + diphosphate. The polypeptide is Cysteine--tRNA ligase (Desulforamulus reducens (strain ATCC BAA-1160 / DSM 100696 / MI-1) (Desulfotomaculum reducens)).